The primary structure comprises 258 residues: Putative cysteine-rich repeat secretory protein 35 (258 aa).

The N-terminal stretch at 1-29 (MYSSYSLSKRLIYVPILAIQFLLVRSVSS) is a signal peptide. 2 Gnk2-homologous domains span residues 36–138 (YLNH…TIKP) and 146–255 (FKNT…LYPF).

This sequence belongs to the cysteine-rich repeat secretory protein family.

It localises to the secreted. The sequence is that of Putative cysteine-rich repeat secretory protein 35 (CRRSP35) from Arabidopsis thaliana (Mouse-ear cress).